The sequence spans 453 residues: UDP-glycosyltransferase 76E9 (453 aa).

UDP-alpha-D-glucose-binding positions include Ser-279, 337–339 (APQ), 354–362 (HCGWNSTLE), and 376–379 (TTDQ).

The protein belongs to the UDP-glycosyltransferase family.

The chain is UDP-glycosyltransferase 76E9 (UGT76E9) from Arabidopsis thaliana (Mouse-ear cress).